Reading from the N-terminus, the 82-residue chain is ATP synthase subunit c, chloroplastic (82 aa).

2 helical membrane passes run 3–23 (PLIA…ASIG) and 57–77 (LAFM…LLFA).

The protein belongs to the ATPase C chain family. In terms of assembly, F-type ATPases have 2 components, F(1) - the catalytic core - and F(0) - the membrane proton channel. F(1) has five subunits: alpha(3), beta(3), gamma(1), delta(1), epsilon(1). F(0) has four main subunits: a(1), b(1), b'(1) and c(10-14). The alpha and beta chains form an alternating ring which encloses part of the gamma chain. F(1) is attached to F(0) by a central stalk formed by the gamma and epsilon chains, while a peripheral stalk is formed by the delta, b and b' chains.

It localises to the plastid. Its subcellular location is the chloroplast thylakoid membrane. In terms of biological role, f(1)F(0) ATP synthase produces ATP from ADP in the presence of a proton or sodium gradient. F-type ATPases consist of two structural domains, F(1) containing the extramembraneous catalytic core and F(0) containing the membrane proton channel, linked together by a central stalk and a peripheral stalk. During catalysis, ATP synthesis in the catalytic domain of F(1) is coupled via a rotary mechanism of the central stalk subunits to proton translocation. Functionally, key component of the F(0) channel; it plays a direct role in translocation across the membrane. A homomeric c-ring of between 10-14 subunits forms the central stalk rotor element with the F(1) delta and epsilon subunits. This chain is ATP synthase subunit c, chloroplastic, found in Nephroselmis olivacea (Green alga).